A 354-amino-acid polypeptide reads, in one-letter code: Elongation factor Ts (354 aa).

The segment at 81 to 84 is involved in Mg(2+) ion dislocation from EF-Tu; the sequence is TDFV.

Belongs to the EF-Ts family.

It localises to the cytoplasm. Its function is as follows. Associates with the EF-Tu.GDP complex and induces the exchange of GDP to GTP. It remains bound to the aminoacyl-tRNA.EF-Tu.GTP complex up to the GTP hydrolysis stage on the ribosome. This is Elongation factor Ts from Campylobacter fetus subsp. fetus (strain 82-40).